We begin with the raw amino-acid sequence, 149 residues long: Calmodulin (149 aa).

Position 2 is an N-acetylalanine (Ala-2). EF-hand domains are found at residues 8 to 43 (EQIAEFKEAFSLFDKDGDGTITTKELGTVMRSLGQN), 44 to 79 (PTEAELQDMINEVDADGNGTIDFPEFLSLMARKMKD), 81 to 116 (DTEEELIEAFKVFDRDGNGFISAAELRHVMTNLGEK), and 117 to 149 (LTDEEVDEMIREADVDGDGQINYEEFVKMMMAK). Asp-21, Asp-23, Asp-25, Thr-27, Glu-32, Asp-57, Asp-59, Asn-61, Thr-63, Glu-68, Asp-94, Asp-96, Asn-98, and Glu-105 together coordinate Ca(2+). An N6,N6,N6-trimethyllysine modification is found at Lys-116. Residues Asp-130, Asp-132, Asp-134, Gln-136, and Glu-141 each contribute to the Ca(2+) site.

This sequence belongs to the calmodulin family.

Its function is as follows. Calmodulin mediates the control of a large number of enzymes, ion channels and other proteins by Ca(2+). Among the enzymes to be stimulated by the calmodulin-Ca(2+) complex are a number of protein kinases and phosphatases. The protein is Calmodulin of Karlodinium veneficum (Dinoflagellate).